Consider the following 269-residue polypeptide: Putative hydro-lyase Swoo_1731 (269 aa).

The protein belongs to the D-glutamate cyclase family.

The protein is Putative hydro-lyase Swoo_1731 of Shewanella woodyi (strain ATCC 51908 / MS32).